Reading from the N-terminus, the 193-residue chain is Acyl carrier protein phosphodiesterase (193 aa).

It belongs to the AcpH family.

The enzyme catalyses holo-[ACP] + H2O = apo-[ACP] + (R)-4'-phosphopantetheine + H(+). Converts holo-ACP to apo-ACP by hydrolytic cleavage of the phosphopantetheine prosthetic group from ACP. The polypeptide is Acyl carrier protein phosphodiesterase (Salmonella agona (strain SL483)).